The primary structure comprises 371 residues: Cytochrome b (371 aa).

The next 4 membrane-spanning stretches (helical) occupy residues 25–45, 69–90, 105–125, and 170–190; these read FGSM…FLAV, WLMQ…YIHI, WMSG…GYVL, and FFAL…LHII. Residues His75 and His89 each contribute to the heme b site. Heme b is bound by residues His174 and His188. His193 is a binding site for a ubiquinone. A run of 4 helical transmembrane segments spans residues 218–238, 280–300, 312–332, and 339–358; these read YKDL…VSFF, LGGA…PLTH, LSQL…WAAT, and YIII…ISTP.

This sequence belongs to the cytochrome b family. In terms of assembly, the cytochrome bc1 complex contains 3 respiratory subunits (MT-CYB, CYC1 and UQCRFS1), 2 core proteins (UQCRC1 and UQCRC2) and probably 6 low-molecular weight proteins. It depends on heme b as a cofactor.

The protein localises to the mitochondrion inner membrane. In terms of biological role, component of the ubiquinol-cytochrome c reductase complex (complex III or cytochrome b-c1 complex) that is part of the mitochondrial respiratory chain. The b-c1 complex mediates electron transfer from ubiquinol to cytochrome c. Contributes to the generation of a proton gradient across the mitochondrial membrane that is then used for ATP synthesis. This is Cytochrome b (MT-CYB) from Python regius (Ball python).